The following is a 249-amino-acid chain: 5'-nucleotidase SurE (249 aa).

A divalent metal cation-binding residues include aspartate 8, aspartate 9, serine 39, and asparagine 91.

It belongs to the SurE nucleotidase family. It depends on a divalent metal cation as a cofactor.

The protein localises to the cytoplasm. It catalyses the reaction a ribonucleoside 5'-phosphate + H2O = a ribonucleoside + phosphate. Nucleotidase that shows phosphatase activity on nucleoside 5'-monophosphates. This Stutzerimonas stutzeri (strain A1501) (Pseudomonas stutzeri) protein is 5'-nucleotidase SurE.